A 62-amino-acid polypeptide reads, in one-letter code: MTIAFQLAVFALIATSSILLISVPVVFASPDGWSSNKNIVFSGTSLWIGLVFLVGILNSLIS.

The next 2 membrane-spanning stretches (helical) occupy residues 8–28 and 41–61; these read AVFA…VVFA and FSGT…NSLI.

The protein belongs to the PsbZ family. As to quaternary structure, PSII is composed of 1 copy each of membrane proteins PsbA, PsbB, PsbC, PsbD, PsbE, PsbF, PsbH, PsbI, PsbJ, PsbK, PsbL, PsbM, PsbT, PsbY, PsbZ, Psb30/Ycf12, at least 3 peripheral proteins of the oxygen-evolving complex and a large number of cofactors. It forms dimeric complexes.

It localises to the plastid. It is found in the chloroplast thylakoid membrane. Its function is as follows. May control the interaction of photosystem II (PSII) cores with the light-harvesting antenna, regulates electron flow through the 2 photosystem reaction centers. PSII is a light-driven water plastoquinone oxidoreductase, using light energy to abstract electrons from H(2)O, generating a proton gradient subsequently used for ATP formation. The sequence is that of Photosystem II reaction center protein Z from Vitis vinifera (Grape).